The following is a 689-amino-acid chain: Glycine--tRNA ligase beta subunit (689 aa).

It belongs to the class-II aminoacyl-tRNA synthetase family. Tetramer of two alpha and two beta subunits.

The protein localises to the cytoplasm. The enzyme catalyses tRNA(Gly) + glycine + ATP = glycyl-tRNA(Gly) + AMP + diphosphate. This chain is Glycine--tRNA ligase beta subunit, found in Salmonella heidelberg (strain SL476).